We begin with the raw amino-acid sequence, 245 residues long: 1-(5-phosphoribosyl)-5-[(5-phosphoribosylamino)methylideneamino] imidazole-4-carboxamide isomerase (245 aa).

The active-site Proton acceptor is the D7. The active-site Proton donor is the D129.

Belongs to the HisA/HisF family.

It is found in the cytoplasm. The catalysed reaction is 1-(5-phospho-beta-D-ribosyl)-5-[(5-phospho-beta-D-ribosylamino)methylideneamino]imidazole-4-carboxamide = 5-[(5-phospho-1-deoxy-D-ribulos-1-ylimino)methylamino]-1-(5-phospho-beta-D-ribosyl)imidazole-4-carboxamide. Its pathway is amino-acid biosynthesis; L-histidine biosynthesis; L-histidine from 5-phospho-alpha-D-ribose 1-diphosphate: step 4/9. In Erwinia tasmaniensis (strain DSM 17950 / CFBP 7177 / CIP 109463 / NCPPB 4357 / Et1/99), this protein is 1-(5-phosphoribosyl)-5-[(5-phosphoribosylamino)methylideneamino] imidazole-4-carboxamide isomerase.